Here is a 511-residue protein sequence, read N- to C-terminus: Acidic amino acid decarboxylase GADL1 (511 aa).

The residue at position 323 (lysine 323) is an N6-(pyridoxal phosphate)lysine.

Belongs to the group II decarboxylase family. Homodimer. Requires pyridoxal 5'-phosphate as cofactor.

The enzyme catalyses L-aspartate + H(+) = beta-alanine + CO2. It carries out the reaction 3-sulfino-L-alanine + H(+) = hypotaurine + CO2. Catalyzes the decarboxylation of L-aspartate, 3-sulfino-L-alanine (cysteine sulfinic acid), and L-cysteate to beta-alanine, hypotaurine and taurine, respectively. The preferred substrate is L-aspartate. Does not exhibit any decarboxylation activity toward glutamate. The chain is Acidic amino acid decarboxylase GADL1 (gadl1) from Xenopus tropicalis (Western clawed frog).